The sequence spans 573 residues: Putative ABC transporter ATP-binding protein LJ_1704 (573 aa).

ABC transporter domains lie at isoleucine 6–glutamate 247 and leucine 303–lysine 536. Residues glycine 40–serine 47 and glycine 337–threonine 344 contribute to the ATP site.

Belongs to the ABC transporter superfamily.

It is found in the cell membrane. Its function is as follows. Probably part of an ABC transporter complex. Responsible for energy coupling to the transport system. The chain is Putative ABC transporter ATP-binding protein LJ_1704 from Lactobacillus johnsonii (strain CNCM I-12250 / La1 / NCC 533).